Reading from the N-terminus, the 65-residue chain is Small ribosomal subunit protein eS27 (65 aa).

Residues cysteine 20, cysteine 23, cysteine 39, and cysteine 42 each contribute to the Zn(2+) site. The C4-type zinc-finger motif lies at 20 to 42; it reads CIDCGNEQIVFSNPATTVRCLVC.

Belongs to the eukaryotic ribosomal protein eS27 family. As to quaternary structure, part of the 30S ribosomal subunit. Zn(2+) serves as cofactor.

The polypeptide is Small ribosomal subunit protein eS27 (Thermococcus onnurineus (strain NA1)).